Reading from the N-terminus, the 352-residue chain is Ribosomal RNA large subunit methyltransferase M (352 aa).

S-adenosyl-L-methionine contacts are provided by residues serine 184, 217–220, aspartate 236, aspartate 256, and aspartate 272; that span reads APGG. Lysine 301 serves as the catalytic Proton acceptor.

Belongs to the class I-like SAM-binding methyltransferase superfamily. RNA methyltransferase RlmE family. RlmM subfamily. In terms of assembly, monomer.

The protein resides in the cytoplasm. It carries out the reaction cytidine(2498) in 23S rRNA + S-adenosyl-L-methionine = 2'-O-methylcytidine(2498) in 23S rRNA + S-adenosyl-L-homocysteine + H(+). Functionally, catalyzes the 2'-O-methylation at nucleotide C2498 in 23S rRNA. The sequence is that of Ribosomal RNA large subunit methyltransferase M from Pseudomonas aeruginosa (strain LESB58).